The sequence spans 89 residues: MSLTQEDKAGIISQFGGVQQNTGKAEVQVALFSRRITDLTGHLQQHPKDKHSRRGLLMLVGKRKKVLNYLKNVDIERYRTVIAELDLRK.

The protein belongs to the universal ribosomal protein uS15 family. Part of the 30S ribosomal subunit. Forms a bridge to the 50S subunit in the 70S ribosome, contacting the 23S rRNA.

One of the primary rRNA binding proteins, it binds directly to 16S rRNA where it helps nucleate assembly of the platform of the 30S subunit by binding and bridging several RNA helices of the 16S rRNA. Its function is as follows. Forms an intersubunit bridge (bridge B4) with the 23S rRNA of the 50S subunit in the ribosome. The polypeptide is Small ribosomal subunit protein uS15 (Chlorobium phaeobacteroides (strain DSM 266 / SMG 266 / 2430)).